We begin with the raw amino-acid sequence, 1087 residues long: Platelet-derived growth factor receptor alpha (1087 aa).

Positions 1–23 are cleaved as a signal peptide; the sequence is MGTPPRTFLILGCFLTGPLLTLC. The Extracellular portion of the chain corresponds to 24-528; sequence QLPLPTIVPN…PTLRSELTVA (505 aa). Ig-like C2-type domains lie at 26 to 104, 116 to 208, 213 to 312, 314 to 411, and 414 to 517; these read PLPT…YNHT, IYIY…IYIL, QLPV…VHDK, FIHL…SLLI, and PALI…LKLV. 4 N-linked (GlcNAc...) asparagine glycosylation sites follow: Asn-44, Asn-75, Asn-88, and Asn-102. Residues Cys-49 and Cys-99 are joined by a disulfide bond. 2 disulfides stabilise this stretch: Cys-149/Cys-189 and Cys-235/Cys-290. Residues Asn-353, Asn-359, Asn-458, and Asn-468 are each glycosylated (N-linked (GlcNAc...) asparagine). A disulfide bond links Cys-435 and Cys-501. The helical transmembrane segment at 529–549 threads the bilayer; it reads AAVLVLLVIVIISLIVLVIIW. Topologically, residues 550–1087 are cytoplasmic; that stretch reads KQKPRYEIRW…SSDLVEDSFL (538 aa). Tyr-572 and Tyr-574 each carry phosphotyrosine; by autocatalysis. Positions 593–954 constitute a Protein kinase domain; that stretch reads LVLGRILGSG…HLSEIVESLL (362 aa). ATP-binding positions include 599–607 and Lys-627; that span reads LGSGAFGKV. 6 positions are modified to phosphotyrosine; by autocatalysis: Tyr-720, Tyr-731, Tyr-742, Tyr-754, Tyr-762, and Tyr-768. Asp-818 serves as the catalytic Proton acceptor. Phosphotyrosine; by autocatalysis occurs at positions 849 and 988. The span at 1000–1011 shows a compositional bias: basic and acidic residues; sequence KDRESGFDEQRL. The tract at residues 1000–1059 is disordered; the sequence is KDRESGFDEQRLSADSGYITPLPDIDPVSEDELGKRNRHSSQTSEESAIETGSSSSTFIK. A Phosphotyrosine; by autocatalysis modification is found at Tyr-1017. Residues 1039–1057 show a composition bias toward polar residues; it reads SSQTSEESAIETGSSSSTF.

It belongs to the protein kinase superfamily. Tyr protein kinase family. CSF-1/PDGF receptor subfamily. In terms of assembly, interacts with homodimeric PDGFA, PDGFB and PDGFC, and with heterodimers formed by PDGFA and PDGFB. Monomer in the absence of bound ligand. Interaction with dimeric PDGFA, PDGFB and/or PDGFC leads to receptor dimerization, where both PDGFRA homodimers and heterodimers with PDGFRB are observed. In terms of processing, ubiquitinated, leading to its internalization and degradation. Autophosphorylated on tyrosine residues upon ligand binding. Autophosphorylation occurs in trans, i.e. one subunit of the dimeric receptor phosphorylates tyrosine residues on the other subunit.

The protein localises to the cell membrane. The protein resides in the cell projection. Its subcellular location is the cilium. It is found in the golgi apparatus. The catalysed reaction is L-tyrosyl-[protein] + ATP = O-phospho-L-tyrosyl-[protein] + ADP + H(+). Present in an inactive conformation in the absence of bound ligand. Binding of PDGFA and/or PDGFB leads to dimerization and activation by autophosphorylation on tyrosine residues. In terms of biological role, tyrosine-protein kinase that acts as a cell-surface receptor for PDGFA, PDGFB and PDGFC and plays an essential role in the regulation of embryonic development, cell proliferation, survival and chemotaxis. Depending on the context, promotes or inhibits cell proliferation and cell migration. Plays an important role in the differentiation of bone marrow-derived mesenchymal stem cells. Required for normal skeleton development. Required for normal development of the gastrointestinal tract. Plays a role in cell migration and chemotaxis in wound healing. Plays a role in platelet activation, secretion of agonists from platelet granules, and in thrombin-induced platelet aggregation. Binding of its cognate ligands - homodimeric PDGFA, homodimeric PDGFB, heterodimers formed by PDGFA and PDGFB or homodimeric PDGFC -leads to the activation of several signaling cascades; the response depends on the nature of the bound ligand and is modulated by the formation of heterodimers between PDGFRA and PDGFRB. Phosphorylates PIK3R1, PLCG1, and PTPN11. Activation of PLCG1 leads to the production of the cellular signaling molecules diacylglycerol and inositol 1,4,5-trisphosphate, mobilization of cytosolic Ca(2+) and the activation of protein kinase C. Phosphorylates PIK3R1, the regulatory subunit of phosphatidylinositol 3-kinase, and thereby mediates activation of the AKT1 signaling pathway. Mediates activation of HRAS and of the MAP kinases MAPK1/ERK2 and/or MAPK3/ERK1. Promotes activation of STAT family members STAT1, STAT3 and STAT5A and/or STAT5B. Receptor signaling is down-regulated by protein phosphatases that dephosphorylate the receptor and its down-stream effectors, and by rapid internalization of the activated receptor. This is Platelet-derived growth factor receptor alpha (PDGFRA) from Gallus gallus (Chicken).